Consider the following 265-residue polypeptide: Transmembrane protein 270 (265 aa).

A run of 3 helical transmembrane segments spans residues 72–92, 130–150, and 185–205; these read PLGQALWAGLALIQVPVWLVL, LFLSCLHGLMLVALLLVVVTW, and LYWWVETMTALTSWHLAYLIT. Residues 229 to 265 are disordered; that stretch reads QEVEPQEVSGSSLLPSLSASSDSESGTVLPEQETPRE. Residues 237–253 are compositionally biased toward low complexity; the sequence is SGSSLLPSLSASSDSES.

It localises to the membrane. The protein is Transmembrane protein 270 of Homo sapiens (Human).